The sequence spans 119 residues: Large ribosomal subunit protein bL20 (119 aa).

It belongs to the bacterial ribosomal protein bL20 family.

Its function is as follows. Binds directly to 23S ribosomal RNA and is necessary for the in vitro assembly process of the 50S ribosomal subunit. It is not involved in the protein synthesizing functions of that subunit. The polypeptide is Large ribosomal subunit protein bL20 (Rhodospirillum centenum (strain ATCC 51521 / SW)).